Here is a 65-residue protein sequence, read N- to C-terminus: Seminal plasma acrosin inhibitor A1 (65 aa).

In terms of domain architecture, Kazal-like spans 1–59 (TRKQPNCNVYRSHLFFCTRQMDPICGTNGKSYANPCIFCSEKGLRNQKFDFGHWGHCRE). Intrachain disulfides connect cysteine 7/cysteine 39, cysteine 17/cysteine 36, and cysteine 25/cysteine 57. O-linked (GalNAc...) serine glycosylation is present at serine 12. Serine 62 is a glycosylation site (O-linked (GalNAc...) serine).

Post-translationally, the identity of the O-linked saccharides are not reported in Ref.1. The O-linked polysaccharides on Ser-12 and Ser-62 are probably the mucin type linked to GalNAc. Seminal plasma.

Its subcellular location is the secreted. Inhibits acrosin. The chain is Seminal plasma acrosin inhibitor A1 from Sus scrofa (Pig).